The following is a 552-amino-acid chain: MDGVVTDLITVGLKRGSDELLSSGIINGPFTMNSSTPSTANGNDSKKFKRDRPPCSPSRVLHLRKIPCDVTEAEIISLGLPFGKVTNLLMLKGKSQAFLEMASEEAAVTMVNYYTPITPHLRSQPVYIQYSNHRELKTDNLPNQARAQAALQAVSAVQSGSLALSGGPSNEGTVLPGQSPVLRIIIENLFYPVTLEVLHQIFSKFGTVLKIITFTKNNQFQALLQYADPVNAHYAKMALDGQNIYNACCTLRIDFSKLTSLNVKYNNDKSRDFTRLDLPTGDGQPSLEPPMAAAFGAPGIISSPYAGAAGFAPAIGFPQATGLSVPAVPGALGPLTITSSAVTGRMAIPGASGIPGNSVLLVTNLNPDLITPHGLFILFGVYGDVHRVKIMFNKKENALVQMADANQAQLAMNHLSGQRLYGKVLRATLSKHQAVQLPREGQEDQGLTKDFSNSPLHRFKKPGSKNFQNIFPPSATLHLSNIPPSVTVDDLKNLFIEAGCSVKAFKFFQKDRKMALIQLGSVEEAIQALIELHNHDLGENHHLRVSFSKSTI.

Met1 carries the post-translational modification N-acetylmethionine. Ser17 carries the post-translational modification Phosphoserine. The segment covering 32-43 (MNSSTPSTANGN) has biased composition (polar residues). The interval 32-55 (MNSSTPSTANGNDSKKFKRDRPPC) is disordered. 3 RRM domains span residues 59–143 (RVLH…NLPN), 182–258 (LRII…FSKL), and 358–432 (SVLL…LSKH). A Glycyl lysine isopeptide (Lys-Gly) (interchain with G-Cter in SUMO2) cross-link involves residue Lys65. Tyr127 carries the phosphotyrosine modification. The residue at position 138 (Thr138) is a Phosphothreonine. Residue Lys216 forms a Glycyl lysine isopeptide (Lys-Gly) (interchain with G-Cter in SUMO2) linkage. The residue at position 423 (Lys423) is an N6-acetyllysine. Residues 435–455 (VQLPREGQEDQGLTKDFSNSP) are disordered. Phosphoserine is present on Ser454. The 76-residue stretch at 475–550 (ATLHLSNIPP…HHLRVSFSKS (76 aa)) folds into the RRM 4 domain.

As to quaternary structure, interacts with THBS4 (via the acidic amphipathic C-terminus). As to expression, expressed in several hematopoietic cell lines examined.

Functionally, RNA-binding protein that mediates pre-mRNA alternative splicing regulation. Plays a role in the regulation of cell proliferation, differentiation and migration. Positive regulator of EPO-dependent erythropoiesis. Participates in cell differentiation regulation by repressing tissue-specific exons. Promotes FAS exon 6 skipping. Binds RNA, preferentially to both poly(G) and poly(U). This chain is Polypyrimidine tract-binding protein 3 (PTBP3), found in Homo sapiens (Human).